A 270-amino-acid chain; its full sequence is NAD kinase (270 aa).

Residue aspartate 45 is the Proton acceptor of the active site. NAD(+) is bound by residues 45-46 (DG), 121-122 (NE), lysine 147, aspartate 149, 160-165 (TAYSKS), and alanine 184.

This sequence belongs to the NAD kinase family. It depends on a divalent metal cation as a cofactor.

It localises to the cytoplasm. It carries out the reaction NAD(+) + ATP = ADP + NADP(+) + H(+). Its function is as follows. Involved in the regulation of the intracellular balance of NAD and NADP, and is a key enzyme in the biosynthesis of NADP. Catalyzes specifically the phosphorylation on 2'-hydroxyl of the adenosine moiety of NAD to yield NADP. This chain is NAD kinase, found in Lactobacillus johnsonii (strain CNCM I-12250 / La1 / NCC 533).